Consider the following 112-residue polypeptide: Seminal vesicle secretory protein 4 (112 aa).

Positions 1 to 21 (MKSTSLFLCSLLLLLVTGAIG) are cleaved as a signal peptide. The tract at residues 26 to 112 (EKYSQSEEVV…RSRFAQDVLN (87 aa)) is disordered. Low complexity-rich tracts occupy residues 36-47 (SESFASGPSSGS) and 85-97 (RSSG…GESS).

Belongs to the SVP2/SVP5/SVP6 family. In terms of tissue distribution, testis.

It is found in the secreted. It localises to the extracellular space. In Rattus norvegicus (Rat), this protein is Seminal vesicle secretory protein 4 (Svs4).